Here is a 277-residue protein sequence, read N- to C-terminus: Ribonuclease HII (277 aa).

The segment at 1–32 is disordered; the sequence is MIRNQANKPGRAKAATAARKSPLTKSAAKPAA. Residues 20 to 32 show a composition bias toward low complexity; it reads KSPLTKSAAKPAA. One can recognise an RNase H type-2 domain in the interval 64 to 252; the sequence is WPVAGCDEAG…VVAARRKHQP (189 aa). A divalent metal cation-binding residues include Asp-70, Glu-71, and Asp-161.

Belongs to the RNase HII family. Requires Mn(2+) as cofactor. It depends on Mg(2+) as a cofactor.

The protein localises to the cytoplasm. It carries out the reaction Endonucleolytic cleavage to 5'-phosphomonoester.. Endonuclease that specifically degrades the RNA of RNA-DNA hybrids. This is Ribonuclease HII from Bradyrhizobium sp. (strain ORS 278).